A 209-amino-acid polypeptide reads, in one-letter code: Egg case collagen (209 aa).

Positions 1-129 are nonhelical region; sequence VYMSGXGKPP…YKGNHGFYLV (129 aa). The triple-helical region stretch occupies residues 130-209; that stretch reads LPAGYPGTPG…DPGLPGEYGV (80 aa). Residues 138–209 are disordered; the sequence is PGTPGPRGGP…DPGLPGEYGV (72 aa). The span at 142-162 shows a compositional bias: gly residues; it reads GPRGGPGDPGMPGEPGVGFPG.

Its function is as follows. Major component of the egg case wall which is secreted by the oviduct. The egg case combines mechanical strength and toughness with high permeability to small molecules and ions. This chain is Egg case collagen, found in Scyliorhinus canicula (Small-spotted catshark).